Reading from the N-terminus, the 237-residue chain is Glutathione S-transferase psoE (237 aa).

Residues 2–79 enclose the GST N-terminal domain; sequence VFGTLYTFPG…YITSQNEQTT (78 aa). 6 residues coordinate glutathione: Arg-37, Lys-49, Val-50, Glu-63, Cys-64, and Asn-99. Residue Lys-49 participates in substrate binding. Positions 84 to 222 constitute a GST C-terminal domain; it reads DKKEYAEIIK…NNPPEKKPET (139 aa). Gln-108 is a substrate binding site. Residues 208 to 222 are compositionally biased toward basic and acidic residues; sequence EPKLTNNPPEKKPET. The interval 208–237 is disordered; it reads EPKLTNNPPEKKPETVPKNGAAVAIEATQA.

It belongs to the GST superfamily. Glutathione is required as a cofactor.

It participates in secondary metabolite biosynthesis. Functionally, glutathione S-transferase; part of the gene cluster that mediates the biosynthesis of pseurotin A, a competitive inhibitor of chitin synthase and an inducer of nerve-cell proliferation. The PKS-NRPS hybrid synthetase psoA is responsible for the biosynthesis of azaspirene, one of the first intermediates having the 1-oxa-7-azaspiro[4,4]-non-2-ene-4,6-dione core of pseurotin, via condensation of one acetyl-CoA, 4 malonyl-CoA, and a L-phenylalanine molecule. The dual-functional monooxygenase/methyltransferase psoF seems to be involved in the addition of the C3 methyl group onto the pseurotin scaffold. Azaspirene is then converted to synerazol through 4 steps including oxidation of C17 by the cytochrome P450 monooxygenase psoD, O-methylation of the hydroxy group of C8 by the methyltransferase psoC, and the trans-to-cis isomerization of the C13 olefin by the glutathione S-transferase psoE. The fourth step of synerazol production is performed by the dual-functional monooxygenase/methyltransferase psoF which seems to catalyze the epoxidation of the intermediate deepoxy-synerazol. Synerazol can be attacked by a water molecule nonenzymatically at two different positions to yield two diol products, pseurotin A and pseurotin D. The polypeptide is Glutathione S-transferase psoE (Aspergillus fumigatus (strain ATCC MYA-4609 / CBS 101355 / FGSC A1100 / Af293) (Neosartorya fumigata)).